We begin with the raw amino-acid sequence, 289 residues long: Acetyl-coenzyme A carboxylase carboxyl transferase subunit beta (289 aa).

The CoA carboxyltransferase N-terminal domain occupies 34–289; sequence MWVKCNKCGE…KLINMHQNSF (256 aa). Zn(2+) contacts are provided by Cys-38, Cys-41, Cys-57, and Cys-60. Residues 38-60 form a C4-type zinc finger; it reads CNKCGEILYQNDLEKNYMVCNLC.

The protein belongs to the AccD/PCCB family. Acetyl-CoA carboxylase is a heterohexamer composed of biotin carboxyl carrier protein (AccB), biotin carboxylase (AccC) and two subunits each of ACCase subunit alpha (AccA) and ACCase subunit beta (AccD). It depends on Zn(2+) as a cofactor.

The protein resides in the cytoplasm. The catalysed reaction is N(6)-carboxybiotinyl-L-lysyl-[protein] + acetyl-CoA = N(6)-biotinyl-L-lysyl-[protein] + malonyl-CoA. It participates in lipid metabolism; malonyl-CoA biosynthesis; malonyl-CoA from acetyl-CoA: step 1/1. In terms of biological role, component of the acetyl coenzyme A carboxylase (ACC) complex. Biotin carboxylase (BC) catalyzes the carboxylation of biotin on its carrier protein (BCCP) and then the CO(2) group is transferred by the transcarboxylase to acetyl-CoA to form malonyl-CoA. This is Acetyl-coenzyme A carboxylase carboxyl transferase subunit beta from Clostridium botulinum (strain ATCC 19397 / Type A).